Reading from the N-terminus, the 156-residue chain is Small ribosomal subunit protein uS7 (156 aa).

Belongs to the universal ribosomal protein uS7 family. As to quaternary structure, part of the 30S ribosomal subunit. Contacts proteins S9 and S11.

Functionally, one of the primary rRNA binding proteins, it binds directly to 16S rRNA where it nucleates assembly of the head domain of the 30S subunit. Is located at the subunit interface close to the decoding center, probably blocks exit of the E-site tRNA. In Janthinobacterium sp. (strain Marseille) (Minibacterium massiliensis), this protein is Small ribosomal subunit protein uS7.